The primary structure comprises 142 residues: 3-hydroxyacyl-[acyl-carrier-protein] dehydratase FabZ (142 aa).

Residue H48 is part of the active site.

It belongs to the thioester dehydratase family. FabZ subfamily.

It is found in the cytoplasm. It catalyses the reaction a (3R)-hydroxyacyl-[ACP] = a (2E)-enoyl-[ACP] + H2O. Functionally, involved in unsaturated fatty acids biosynthesis. Catalyzes the dehydration of short chain beta-hydroxyacyl-ACPs and long chain saturated and unsaturated beta-hydroxyacyl-ACPs. The protein is 3-hydroxyacyl-[acyl-carrier-protein] dehydratase FabZ of Prochlorococcus marinus (strain MIT 9313).